The sequence spans 217 residues: Small ribosomal subunit protein uS3 (217 aa).

A KH type-2 domain is found at 38-106 (IRKFINKELA…QVHINIIEIK (69 aa)).

This sequence belongs to the universal ribosomal protein uS3 family. In terms of assembly, part of the 30S ribosomal subunit. Forms a tight complex with proteins S10 and S14.

Functionally, binds the lower part of the 30S subunit head. Binds mRNA in the 70S ribosome, positioning it for translation. The sequence is that of Small ribosomal subunit protein uS3 from Streptococcus equi subsp. equi (strain 4047).